A 276-amino-acid chain; its full sequence is NAD-capped RNA hydrolase NudC (276 aa).

Arg-82 is a substrate binding site. 2 residues coordinate Zn(2+): Cys-112 and Cys-115. Glu-125 lines the substrate pocket. Zn(2+) contacts are provided by Cys-130 and Cys-133. Tyr-138 lines the substrate pocket. The 124-residue stretch at 139-262 folds into the Nudix hydrolase domain; that stretch reads PRISPSMIVL…SIARYLIDLY (124 aa). A divalent metal cation is bound by residues Ala-172, Glu-188, and Glu-192. Residues 173 to 194 carry the Nudix box motif; it reads GFAEPGESAEECLVREVREEVA. Substrate is bound at residue 206–213; that stretch reads QCWPFPHS. Glu-233 contacts a divalent metal cation. Ala-255 serves as a coordination point for substrate.

It belongs to the Nudix hydrolase family. NudC subfamily. As to quaternary structure, homodimer. It depends on Mg(2+) as a cofactor. Requires Mn(2+) as cofactor. Zn(2+) is required as a cofactor.

The enzyme catalyses a 5'-end NAD(+)-phospho-ribonucleoside in mRNA + H2O = a 5'-end phospho-adenosine-phospho-ribonucleoside in mRNA + beta-nicotinamide D-ribonucleotide + 2 H(+). It catalyses the reaction NAD(+) + H2O = beta-nicotinamide D-ribonucleotide + AMP + 2 H(+). The catalysed reaction is NADH + H2O = reduced beta-nicotinamide D-ribonucleotide + AMP + 2 H(+). Its function is as follows. mRNA decapping enzyme that specifically removes the nicotinamide adenine dinucleotide (NAD) cap from a subset of mRNAs by hydrolyzing the diphosphate linkage to produce nicotinamide mononucleotide (NMN) and 5' monophosphate mRNA. The NAD-cap is present at the 5'-end of some mRNAs and stabilizes RNA against 5'-processing. Has preference for mRNAs with a 5'-end purine. Catalyzes the hydrolysis of a broad range of dinucleotide pyrophosphates. The sequence is that of NAD-capped RNA hydrolase NudC from Pseudomonas entomophila (strain L48).